The following is a 121-amino-acid chain: Small ribosomal subunit protein bS6 (121 aa).

The protein belongs to the bacterial ribosomal protein bS6 family.

Functionally, binds together with bS18 to 16S ribosomal RNA. This is Small ribosomal subunit protein bS6 from Rickettsia conorii (strain ATCC VR-613 / Malish 7).